Here is a 178-residue protein sequence, read N- to C-terminus: Ribosome maturation factor RimP (178 aa).

It belongs to the RimP family.

The protein localises to the cytoplasm. In terms of biological role, required for maturation of 30S ribosomal subunits. This is Ribosome maturation factor RimP from Streptococcus pyogenes serotype M3 (strain ATCC BAA-595 / MGAS315).